A 215-amino-acid chain; its full sequence is Protein N-lysine methyltransferase METTL21A (215 aa).

Residues Trp-47, 73-75 (GAG), Asp-94, Trp-125, and Ala-141 contribute to the S-adenosyl-L-methionine site.

It belongs to the methyltransferase superfamily. METTL21 family.

It localises to the cytoplasm. It carries out the reaction L-lysyl-[protein] + 3 S-adenosyl-L-methionine = N(6),N(6),N(6)-trimethyl-L-lysyl-[protein] + 3 S-adenosyl-L-homocysteine + 3 H(+). Protein-lysine methyltransferase that selectively trimethylates residues in heat shock protein 70 (HSP70) family members. This Xenopus tropicalis (Western clawed frog) protein is Protein N-lysine methyltransferase METTL21A (mettl21a).